A 445-amino-acid polypeptide reads, in one-letter code: Glutamate--tRNA ligase 2 (445 aa).

The 'HIGH' region signature appears at 10-20 (PSPTGRLHVGN). The 'KMSKS' region signature appears at 241-245 (ALSKR). Lys244 contributes to the ATP binding site.

The protein belongs to the class-I aminoacyl-tRNA synthetase family. Glutamate--tRNA ligase type 1 subfamily. In terms of assembly, monomer.

It is found in the cytoplasm. It carries out the reaction tRNA(Glu) + L-glutamate + ATP = L-glutamyl-tRNA(Glu) + AMP + diphosphate. Functionally, catalyzes the attachment of glutamate to tRNA(Glu) in a two-step reaction: glutamate is first activated by ATP to form Glu-AMP and then transferred to the acceptor end of tRNA(Glu). This Hyphomonas neptunium (strain ATCC 15444) protein is Glutamate--tRNA ligase 2.